Reading from the N-terminus, the 570-residue chain is MSEKHPGPLVVEGKLTDAERMKVDSNYLRGTIAEDLNDGLTGGFKGDNFLLIRFHGMYQQDDRDIRAERAEQKLEPRHAMLLRCRLPGGVITTKQWQAIDKFAHDNTIYGSIRLTNRQTFQFHGILKKNVKPVHQMLHSVGLDALATANDMNRNVLCTSNPYESELHAEAYEWAKKISEHLLPRTRAYAEIWLDQEKVATTDVEPILGQTYLPRKFKTTVVIPPQNDIDLHANDMNFVAIAENGKLVGFNLLVGGGLSIEHGNKKTYARTASEFGYIPLEHTLAVAEAVVTTQRDWGNRTDRKNAKTKYTLERVGVETFKAEVERRAGITFEPIRAYEFTGRGDRIGWVKGIDNKWHLTLFIENGRILDYPGRPLKTGLLEIAKIHKGEFRITANQNLIIAGVPESQKAKIEKLAREHTLMDGVKPQRENSMACVSFPTCPLAMAEAERFLPSFTDKVEAVLAKHGIPDEHIVMRVTGCPNGCGRALLAELGLVGKAPGRYNVHLGGNRSGTRIPRMYRENITEPEILDSLDELVGRWAKEREAGEGFGDFTVRAGIIRPVLDPARDFWE.

[4Fe-4S] cluster contacts are provided by Cys-434, Cys-440, Cys-479, and Cys-483. A siroheme-binding site is contributed by Cys-483.

Belongs to the nitrite and sulfite reductase 4Fe-4S domain family. In terms of assembly, alpha(8)-beta(8). The alpha component is a flavoprotein, the beta component is a hemoprotein. Siroheme is required as a cofactor. [4Fe-4S] cluster serves as cofactor.

It carries out the reaction hydrogen sulfide + 3 NADP(+) + 3 H2O = sulfite + 3 NADPH + 4 H(+). Its pathway is sulfur metabolism; hydrogen sulfide biosynthesis; hydrogen sulfide from sulfite (NADPH route): step 1/1. Functionally, component of the sulfite reductase complex that catalyzes the 6-electron reduction of sulfite to sulfide. This is one of several activities required for the biosynthesis of L-cysteine from sulfate. This Enterobacter sp. (strain 638) protein is Sulfite reductase [NADPH] hemoprotein beta-component.